We begin with the raw amino-acid sequence, 110 residues long: Large ribosomal subunit protein P2B (110 aa).

S29 is subject to Phosphoserine. A Glycyl lysine isopeptide (Lys-Gly) (interchain with G-Cter in ubiquitin) cross-link involves residue K49. The tract at residues 66 to 110 (VPTGGASSAAAGAAGAAAGGDAAEEEKEEEAKEESDDDMGFGLFD) is disordered. The span at 69 to 86 (GGASSAAAGAAGAAAGGD) shows a compositional bias: low complexity. A compositionally biased stretch (acidic residues) spans 87–104 (AAEEEKEEEAKEESDDDM). S100 carries the post-translational modification Phosphoserine.

Belongs to the eukaryotic ribosomal protein P1/P2 family. As to quaternary structure, component of the large ribosomal subunit (LSU). Mature yeast ribosomes consist of a small (40S) and a large (60S) subunit. The 40S small subunit contains 1 molecule of ribosomal RNA (18S rRNA) and 33 different proteins (encoded by 57 genes). The large 60S subunit contains 3 rRNA molecules (25S, 5.8S and 5S rRNA) and 46 different proteins (encoded by 81 genes). The 5 acidic ribosomal P-proteins form the stalk structure of the 60S subunit. They are organized as a pentameric complex in which uL10/P0 interacts with 2 heterodimers, P1A-P2B and P1B-P2A. Post-translationally, the N-terminus is not modified.

Its subcellular location is the cytoplasm. Component of the ribosome, a large ribonucleoprotein complex responsible for the synthesis of proteins in the cell. The small ribosomal subunit (SSU) binds messenger RNAs (mRNAs) and translates the encoded message by selecting cognate aminoacyl-transfer RNA (tRNA) molecules. The large subunit (LSU) contains the ribosomal catalytic site termed the peptidyl transferase center (PTC), which catalyzes the formation of peptide bonds, thereby polymerizing the amino acids delivered by tRNAs into a polypeptide chain. The nascent polypeptides leave the ribosome through a tunnel in the LSU and interact with protein factors that function in enzymatic processing, targeting, and the membrane insertion of nascent chains at the exit of the ribosomal tunnel. This Saccharomyces cerevisiae (strain ATCC 204508 / S288c) (Baker's yeast) protein is Large ribosomal subunit protein P2B.